The following is a 226-amino-acid chain: MTEPKRAIVLLSGGLDSATCLAIARNAGFDCYALSIAYGQRHTAELAAARRVAQSLDAREHRLAHVSLGEFGGSALTDSSIPVPIEGAVGGIPVTYVPARNTVMLSIALAWAEVLGAHDIYVGVNAVDYSGYPDCRPEFIAAFEAMANLATKAGIEGARITIHAPLIRLSKAGIIQRGTALGVDYAQTVSCYQADEAGRACGVCDACRLRKAGFEAAGIPDPTPYR.

ATP is bound at residue 11–21; that stretch reads LSGGLDSATCL. The Zn(2+) site is built by Cys-191, Cys-201, Cys-204, and Cys-207.

The protein belongs to the QueC family. Requires Zn(2+) as cofactor.

The enzyme catalyses 7-carboxy-7-deazaguanine + NH4(+) + ATP = 7-cyano-7-deazaguanine + ADP + phosphate + H2O + H(+). It functions in the pathway purine metabolism; 7-cyano-7-deazaguanine biosynthesis. Catalyzes the ATP-dependent conversion of 7-carboxy-7-deazaguanine (CDG) to 7-cyano-7-deazaguanine (preQ(0)). The polypeptide is 7-cyano-7-deazaguanine synthase (Aromatoleum aromaticum (strain DSM 19018 / LMG 30748 / EbN1) (Azoarcus sp. (strain EbN1))).